The chain runs to 169 residues: Large ribosomal subunit protein uL10 (169 aa).

It belongs to the universal ribosomal protein uL10 family. As to quaternary structure, part of the ribosomal stalk of the 50S ribosomal subunit. The N-terminus interacts with L11 and the large rRNA to form the base of the stalk. The C-terminus forms an elongated spine to which L12 dimers bind in a sequential fashion forming a multimeric L10(L12)X complex.

Its function is as follows. Forms part of the ribosomal stalk, playing a central role in the interaction of the ribosome with GTP-bound translation factors. This chain is Large ribosomal subunit protein uL10, found in Lactobacillus delbrueckii subsp. bulgaricus (strain ATCC 11842 / DSM 20081 / BCRC 10696 / JCM 1002 / NBRC 13953 / NCIMB 11778 / NCTC 12712 / WDCM 00102 / Lb 14).